The primary structure comprises 857 residues: Envelope glycoprotein gp160 (857 aa).

Positions 1 to 26 are cleaved as a signal peptide; sequence MAHTSNHLFILLLLISVYGFLGHKKN. Residues 27–682 are Extracellular-facing; the sequence is YVTVFYGIPA…FTSWMAYIRL (656 aa). A glycan (N-linked (GlcNAc...) asparagine; by host) is linked at N39. A disulfide bridge links C46 with C59. N72, N81, N116, N121, N142, N150, N167, N193, N205, N237, N240, N271, N277, N288, N299, N309, N364, N397, N407, N447, N464, and N469 each carry an N-linked (GlcNAc...) asparagine; by host glycan. Intrachain disulfides connect C103-C213, C110-C204, C115-C164, C226-C256, and C236-C248. The V1 stretch occupies residues 115–163; that stretch reads CNNTGTNTTTKPITTPITTTKPSENLLNDTSPCIKNDTCPGIGLENTVD. A V2 region spans residues 164-204; the sequence is CYFNMTGLRRDEKKQYKDTWYEKDLECNGNSTSTICYMRTC. Residues 304-336 form a V3 region; sequence CRRPGNKTVIPITIMSGLNFHSQPLNTRPRQAW. A disulfide bridge connects residues C304 and C337. 2 cysteine pairs are disulfide-bonded: C389–C446 and C396–C419. Residues 396-419 are V4; sequence CNMTWFLNWVENRTGTTQKNYVTC. Residues 464-472 form a V5 region; sequence NDTKTNITM. The segment at 515-535 is fusion peptide; sequence GVMVLGFLGLLAMAGSAMGAT. Residues 578–594 form an immunosuppression region; that stretch reads LQTRVTAIEKYLKDQAL. Residues N614, N623, and N639 are each glycosylated (N-linked (GlcNAc...) asparagine; by host). Positions 627-648 form a coiled coil; it reads QQWEKRVNFLDANITALLEEAQ. An MPER; binding to GalCer region spans residues 660 to 681; sequence KLNSWDVFGNWFDFTSWMAYIR. A helical transmembrane segment spans residues 683–703; sequence GLYVVAGLIVLRIVIYIMQML. The Cytoplasmic segment spans residues 704 to 857; it reads ARLRKGYRPV…IRQGLELALL (154 aa). The YXXV motif; contains endocytosis signal signature appears at 710 to 713; it reads YRPV. A lipid anchor (S-palmitoyl cysteine; by host) is attached at C776. A Di-leucine internalization motif motif is present at residues 856-857; the sequence is LL.

In terms of assembly, the mature envelope protein (Env) consists of a homotrimer of non-covalently associated gp120-gp41 heterodimers. The resulting complex protrudes from the virus surface as a spike. There seems to be as few as 10 spikes on the average virion. Interacts with human CD4, CCR5 and CXCR4, to form a P4HB/PDI-CD4-CXCR4-gp120 complex. Gp120 also interacts with the C-type lectins CD209/DC-SIGN and CLEC4M/DC-SIGNR (collectively referred to as DC-SIGN(R)). Gp120 and gp41 interact with GalCer. As to quaternary structure, the mature envelope protein (Env) consists of a homotrimer of non-covalently associated gp120-gp41 heterodimers. The resulting complex protrudes from the virus surface as a spike. There seems to be as few as 10 spikes on the average virion. Post-translationally, specific enzymatic cleavages in vivo yield mature proteins. Envelope glycoproteins are synthesized as an inactive precursor that is heavily N-glycosylated and processed likely by host cell furin in the Golgi to yield the mature SU and TM proteins. The cleavage site between SU and TM requires the minimal sequence [KR]-X-[KR]-R. In terms of processing, palmitoylation of the transmembrane protein and of Env polyprotein (prior to its proteolytic cleavage) is essential for their association with host cell membrane lipid rafts. Palmitoylation is therefore required for envelope trafficking to classical lipid rafts, but not for viral replication.

The protein localises to the virion membrane. It localises to the host cell membrane. Its subcellular location is the host endosome membrane. In terms of biological role, the surface protein gp120 (SU) attaches the virus to the host lymphoid cell by binding to the primary receptor CD4. This interaction induces a structural rearrangement creating a high affinity binding site for a chemokine coreceptor like CXCR4 and/or CCR5. This peculiar 2 stage receptor-interaction strategy allows gp120 to maintain the highly conserved coreceptor-binding site in a cryptic conformation, protected from neutralizing antibodies. Since CD4 also displays a binding site for the disulfide-isomerase P4HB/PDI, a P4HB/PDI-CD4-CXCR4-gp120 complex may form. In that complex, P4HB/PDI could reach and reduce gp120 disulfide bonds, causing major conformational changes in gp120. TXN, another PDI family member could also be involved in disulfide rearrangements in Env during fusion. These changes are transmitted to the transmembrane protein gp41 and are thought to activate its fusogenic potential by unmasking its fusion peptide. Its function is as follows. The surface protein gp120 is a ligand for CD209/DC-SIGN and CLEC4M/DC-SIGNR, which are respectively found on dendritic cells (DCs), and on endothelial cells of liver sinusoids and lymph node sinuses. These interactions allow capture of viral particles at mucosal surfaces by these cells and subsequent transmission to permissive cells. DCs are professional antigen presenting cells, critical for host immunity by inducing specific immune responses against a broad variety of pathogens. They act as sentinels in various tissues where they take up antigen, process it, and present it to T-cells following migration to lymphoid organs. HIV subverts the migration properties of dendritic cells to gain access to CD4+ T-cells in lymph nodes. Virus transmission to permissive T-cells occurs either in trans (without DCs infection, through viral capture and transmission), or in cis (following DCs productive infection, through the usual CD4-gp120 interaction), thereby inducing a robust infection. In trans infection, bound virions remain infectious over days and it is proposed that they are not degraded, but protected in non-lysosomal acidic organelles within the DCs close to the cell membrane thus contributing to the viral infectious potential during DCs' migration from the periphery to the lymphoid tissues. On arrival at lymphoid tissues, intact virions recycle back to DCs' cell surface allowing virus transmission to CD4+ T-cells. Virion capture also seems to lead to MHC-II-restricted viral antigen presentation, and probably to the activation of HIV-specific CD4+ cells. The transmembrane protein gp41 (TM) acts as a class I viral fusion protein. Under the current model, the protein has at least 3 conformational states: pre-fusion native state, pre-hairpin intermediate state, and post-fusion hairpin state. During fusion of viral and target intracellular membranes, the coiled coil regions (heptad repeats) assume a trimer-of-hairpins structure, positioning the fusion peptide in close proximity to the C-terminal region of the ectodomain. The formation of this structure appears to drive apposition and subsequent fusion of viral and target cell membranes. Complete fusion occurs in host cell endosomes and is dynamin-dependent, however some lipid transfer might occur at the plasma membrane. The virus undergoes clathrin-dependent internalization long before endosomal fusion, thus minimizing the surface exposure of conserved viral epitopes during fusion and reducing the efficacy of inhibitors targeting these epitopes. Membranes fusion leads to delivery of the nucleocapsid into the cytoplasm. Functionally, the envelope glycoprotein gp160 precursor down-modulates cell surface CD4 antigen by interacting with it in the endoplasmic reticulum and blocking its transport to the cell surface. In terms of biological role, the gp120-gp41 heterodimer seems to contribute to T-cell depletion during HIV-1 infection. The envelope glycoproteins expressed on the surface of infected cells induce apoptosis through an interaction with uninfected cells expressing the receptor (CD4) and the coreceptors CXCR4 or CCR5. This type of bystander killing may be obtained by at least three distinct mechanisms. First, the interaction between the 2 cells can induce cellular fusion followed by nuclear fusion within the syncytium. Syncytia are condemned to die from apoptosis. Second, the 2 interacting cells may not fuse entirely and simply exchange plasma membrane lipids, after a sort of hemifusion process, followed by rapid death. Third, it is possible that virus-infected cells, on the point of undergoing apoptosis, fuse with CD4-expressing cells, in which case apoptosis is rapidly transmitted from one cell to the other and thus occurs in a sort of contagious fashion. Its function is as follows. The gp120-gp41 heterodimer allows rapid transcytosis of the virus through CD4 negative cells such as simple epithelial monolayers of the intestinal, rectal and endocervical epithelial barriers. Both gp120 and gp41 specifically recognize glycosphingolipids galactosyl-ceramide (GalCer) or 3' sulfo-galactosyl-ceramide (GalS) present in the lipid rafts structures of epithelial cells. Binding to these alternative receptors allows the rapid transcytosis of the virus through the epithelial cells. This transcytotic vesicle-mediated transport of virions from the apical side to the basolateral side of the epithelial cells does not involve infection of the cells themselves. The polypeptide is Envelope glycoprotein gp160 (env) (Homo sapiens (Human)).